The primary structure comprises 607 residues: Arginine--tRNA ligase (607 aa).

A 'HIGH' region motif is present at residues 147–157; sequence PNIAKEMHVGH.

It belongs to the class-I aminoacyl-tRNA synthetase family. As to quaternary structure, monomer.

Its subcellular location is the cytoplasm. It catalyses the reaction tRNA(Arg) + L-arginine + ATP = L-arginyl-tRNA(Arg) + AMP + diphosphate. The sequence is that of Arginine--tRNA ligase from Prochlorococcus marinus (strain NATL2A).